A 138-amino-acid chain; its full sequence is Large ribosomal subunit protein mL43 (138 aa).

Belongs to the mitochondrion-specific ribosomal protein mL43 family. As to quaternary structure, component of the mitochondrial large ribosomal subunit (mt-LSU). Mature N.crassa 74S mitochondrial ribosomes consist of a small (37S) and a large (54S) subunit. The 37S small subunit contains a 16S ribosomal RNA (16S mt-rRNA) and 32 different proteins. The 54S large subunit contains a 23S rRNA (23S mt-rRNA) and 42 different proteins.

The protein localises to the mitochondrion. Its function is as follows. Component of the mitochondrial ribosome (mitoribosome), a dedicated translation machinery responsible for the synthesis of mitochondrial genome-encoded proteins, including at least some of the essential transmembrane subunits of the mitochondrial respiratory chain. The mitoribosomes are attached to the mitochondrial inner membrane and translation products are cotranslationally integrated into the membrane. The sequence is that of Large ribosomal subunit protein mL43 (mrpl51) from Neurospora crassa (strain ATCC 24698 / 74-OR23-1A / CBS 708.71 / DSM 1257 / FGSC 987).